Reading from the N-terminus, the 375-residue chain is Succinyl-diaminopimelate desuccinylase (375 aa).

Residue His66 coordinates Zn(2+). Asp68 is a catalytic residue. Asp99 provides a ligand contact to Zn(2+). Glu133 serves as the catalytic Proton acceptor. Zn(2+) contacts are provided by Glu134, Glu162, and His348.

This sequence belongs to the peptidase M20A family. DapE subfamily. Homodimer. It depends on Zn(2+) as a cofactor. Requires Co(2+) as cofactor.

The catalysed reaction is N-succinyl-(2S,6S)-2,6-diaminopimelate + H2O = (2S,6S)-2,6-diaminopimelate + succinate. Its pathway is amino-acid biosynthesis; L-lysine biosynthesis via DAP pathway; LL-2,6-diaminopimelate from (S)-tetrahydrodipicolinate (succinylase route): step 3/3. Its function is as follows. Catalyzes the hydrolysis of N-succinyl-L,L-diaminopimelic acid (SDAP), forming succinate and LL-2,6-diaminopimelate (DAP), an intermediate involved in the bacterial biosynthesis of lysine and meso-diaminopimelic acid, an essential component of bacterial cell walls. The sequence is that of Succinyl-diaminopimelate desuccinylase from Salmonella dublin (strain CT_02021853).